Here is a 412-residue protein sequence, read N- to C-terminus: Pentatricopeptide repeat-containing protein At3g60980, mitochondrial (412 aa).

The transit peptide at 1 to 18 (MSLIGRLNLGRRFCTAVP) directs the protein to the mitochondrion. PPR repeat units lie at residues 69 to 104 (TTTI…NLRP), 105 to 139 (NSHC…GQVH), 143 to 178 (SDDS…TTYP), 179 to 213 (DHVA…FLIA), 230 to 264 (VAFL…NRLL), 266 to 296 (CAET…LLDK), 305 to 339 (DSDT…NDYL), 344 to 371 (IITR…DFGY), and 373 to 407 (DVNT…TLKE).

The protein belongs to the PPR family. P subfamily.

The protein localises to the mitochondrion. This Arabidopsis thaliana (Mouse-ear cress) protein is Pentatricopeptide repeat-containing protein At3g60980, mitochondrial.